The sequence spans 290 residues: Shikimate dehydrogenase (NADP(+)) (290 aa).

Residues 24-26 (SKS) and Thr71 contribute to the shikimate site. Catalysis depends on Lys75, which acts as the Proton acceptor. Positions 96 and 111 each coordinate shikimate. Residues 135–139 (GAGGA), 159–164 (NRTKQR), and Ile228 contribute to the NADP(+) site. Shikimate is bound at residue Tyr230. Gly251 serves as a coordination point for NADP(+).

This sequence belongs to the shikimate dehydrogenase family. As to quaternary structure, homodimer.

The catalysed reaction is shikimate + NADP(+) = 3-dehydroshikimate + NADPH + H(+). It participates in metabolic intermediate biosynthesis; chorismate biosynthesis; chorismate from D-erythrose 4-phosphate and phosphoenolpyruvate: step 4/7. Its function is as follows. Involved in the biosynthesis of the chorismate, which leads to the biosynthesis of aromatic amino acids. Catalyzes the reversible NADPH linked reduction of 3-dehydroshikimate (DHSA) to yield shikimate (SA). The protein is Shikimate dehydrogenase (NADP(+)) of Bartonella tribocorum (strain CIP 105476 / IBS 506).